Here is a 333-residue protein sequence, read N- to C-terminus: Adenosine deaminase (333 aa).

Residues His-12 and His-14 each coordinate Zn(2+). His-14, Asp-16, and Gly-170 together coordinate substrate. His-197 is a Zn(2+) binding site. The active-site Proton donor is Glu-200. Asp-278 provides a ligand contact to Zn(2+). Asp-279 contributes to the substrate binding site.

The protein belongs to the metallo-dependent hydrolases superfamily. Adenosine and AMP deaminases family. Adenosine deaminase subfamily. Zn(2+) serves as cofactor.

The catalysed reaction is adenosine + H2O + H(+) = inosine + NH4(+). The enzyme catalyses 2'-deoxyadenosine + H2O + H(+) = 2'-deoxyinosine + NH4(+). Its function is as follows. Catalyzes the hydrolytic deamination of adenosine and 2-deoxyadenosine. This chain is Adenosine deaminase, found in Escherichia coli O157:H7.